The following is a 456-amino-acid chain: Phosphomethylpyrimidine synthase (456 aa).

Substrate is bound by residues Asn-80, Met-109, Tyr-139, His-175, 195–197, 236–239, and Glu-275; these read SRG and DSLR. Zn(2+) is bound at residue His-279. Tyr-302 contributes to the substrate binding site. His-343 is a binding site for Zn(2+). [4Fe-4S] cluster contacts are provided by Cys-423, Cys-426, and Cys-431.

The protein belongs to the ThiC family. [4Fe-4S] cluster serves as cofactor.

The enzyme catalyses 5-amino-1-(5-phospho-beta-D-ribosyl)imidazole + S-adenosyl-L-methionine = 4-amino-2-methyl-5-(phosphooxymethyl)pyrimidine + CO + 5'-deoxyadenosine + formate + L-methionine + 3 H(+). It participates in cofactor biosynthesis; thiamine diphosphate biosynthesis. Functionally, catalyzes the synthesis of the hydroxymethylpyrimidine phosphate (HMP-P) moiety of thiamine from aminoimidazole ribotide (AIR) in a radical S-adenosyl-L-methionine (SAM)-dependent reaction. In Synechococcus sp. (strain ATCC 27144 / PCC 6301 / SAUG 1402/1) (Anacystis nidulans), this protein is Phosphomethylpyrimidine synthase.